The sequence spans 417 residues: NADH-quinone oxidoreductase subunit D (417 aa).

The protein belongs to the complex I 49 kDa subunit family. NDH-1 is composed of 14 different subunits. Subunits NuoB, C, D, E, F, and G constitute the peripheral sector of the complex.

Its subcellular location is the cell inner membrane. The catalysed reaction is a quinone + NADH + 5 H(+)(in) = a quinol + NAD(+) + 4 H(+)(out). Functionally, NDH-1 shuttles electrons from NADH, via FMN and iron-sulfur (Fe-S) centers, to quinones in the respiratory chain. The immediate electron acceptor for the enzyme in this species is believed to be ubiquinone. Couples the redox reaction to proton translocation (for every two electrons transferred, four hydrogen ions are translocated across the cytoplasmic membrane), and thus conserves the redox energy in a proton gradient. The sequence is that of NADH-quinone oxidoreductase subunit D from Coxiella burnetii (strain Dugway 5J108-111).